Reading from the N-terminus, the 156-residue chain is Cyanate hydratase (156 aa).

Catalysis depends on residues Arg-96, Glu-99, and Ser-122.

The protein belongs to the cyanase family.

The enzyme catalyses cyanate + hydrogencarbonate + 3 H(+) = NH4(+) + 2 CO2. Its function is as follows. Catalyzes the reaction of cyanate with bicarbonate to produce ammonia and carbon dioxide. This chain is Cyanate hydratase, found in Pseudomonas entomophila (strain L48).